The chain runs to 382 residues: MPQRHPQPAHPADGIYFGLMSGTSMDGVDGVAVRFETGHAPVVLAEAFVGFAQSLRDALFALQQPGDDEIDRESLAANALVARYAVCCHELQRTAGLSRDEIRAIGVHGQTVRHRPERGYTRQLNNPALLAELTQVDVIADFRSRDVAAGGHGAPLAPAFHATVFGAPGETRVVCNLGGISNITILPGEGGDVRGFDCGPANALLDEWATRHLGKPYDDGGKFAARGTVHAPLLDALLDEPYFAAAPPKSTGRDLFNPGWLDAKLAAFVQVAPQDVQATLTALTAVSVAREVATHASGCKALFVCGGGARNPVLLDALRHALHEAGVLASVDTTAALGVPPQQVEALAFAWLAYRFTGREPGNLATVTGAAGNRVLGALYPR.

22-29 (GTSMDGVD) lines the ATP pocket.

This sequence belongs to the anhydro-N-acetylmuramic acid kinase family.

It catalyses the reaction 1,6-anhydro-N-acetyl-beta-muramate + ATP + H2O = N-acetyl-D-muramate 6-phosphate + ADP + H(+). It functions in the pathway amino-sugar metabolism; 1,6-anhydro-N-acetylmuramate degradation. It participates in cell wall biogenesis; peptidoglycan recycling. Its function is as follows. Catalyzes the specific phosphorylation of 1,6-anhydro-N-acetylmuramic acid (anhMurNAc) with the simultaneous cleavage of the 1,6-anhydro ring, generating MurNAc-6-P. Is required for the utilization of anhMurNAc either imported from the medium or derived from its own cell wall murein, and thus plays a role in cell wall recycling. The sequence is that of Anhydro-N-acetylmuramic acid kinase from Burkholderia ambifaria (strain ATCC BAA-244 / DSM 16087 / CCUG 44356 / LMG 19182 / AMMD) (Burkholderia cepacia (strain AMMD)).